Reading from the N-terminus, the 674-residue chain is Probable L-type lectin-domain containing receptor kinase II.1 (674 aa).

Positions 1–24 are cleaved as a signal peptide; that stretch reads MAGVLGSVVFWLIIGIHVTFLVFA. Residues 25–301 are Extracellular-facing; sequence QEGDHFVYYD…PSPKRFPLKE (277 aa). Residues 28-274 are legume-lectin like; that stretch reads DHFVYYDFRN…NQYILGWSFK (247 aa). N-linked (GlcNAc...) asparagine glycosylation is found at N57, N117, N133, N185, N210, and N242. A helical transmembrane segment spans residues 302–322; sequence VLGATISTIAFLTLGGIVYLY. The Cytoplasmic portion of the chain corresponds to 323–674; the sequence is KKKKYAEVLE…EDVTVLFGGR (352 aa). In terms of domain architecture, Protein kinase spans 355–633; sequence FRENQLLGAG…LEGNVSVPAI (279 aa). Residues 361 to 369 and K383 contribute to the ATP site; that span reads LGAGGFGKV. D480 serves as the catalytic Proton acceptor.

This sequence in the C-terminal section; belongs to the protein kinase superfamily. Ser/Thr protein kinase family. The protein in the N-terminal section; belongs to the leguminous lectin family.

The protein localises to the cell membrane. It catalyses the reaction L-seryl-[protein] + ATP = O-phospho-L-seryl-[protein] + ADP + H(+). The catalysed reaction is L-threonyl-[protein] + ATP = O-phospho-L-threonyl-[protein] + ADP + H(+). The polypeptide is Probable L-type lectin-domain containing receptor kinase II.1 (LECRK21) (Arabidopsis thaliana (Mouse-ear cress)).